The primary structure comprises 139 residues: Large ribosomal subunit protein bL17 (139 aa).

This sequence belongs to the bacterial ribosomal protein bL17 family. As to quaternary structure, part of the 50S ribosomal subunit. Contacts protein L32.

This Azorhizobium caulinodans (strain ATCC 43989 / DSM 5975 / JCM 20966 / LMG 6465 / NBRC 14845 / NCIMB 13405 / ORS 571) protein is Large ribosomal subunit protein bL17.